Here is a 154-residue protein sequence, read N- to C-terminus: Hemiasterlin resistant protein 1 (154 aa).

Disordered stretches follow at residues M1–M64 and G86–A109. Low complexity-rich tracts occupy residues A7–A28, T48–P57, and A96–A109. The region spanning S116–A154 is the CHCH domain. 2 short sequence motifs (cx9C motif) span residues C119–C129 and C139–C149. 2 cysteine pairs are disulfide-bonded: C119/C149 and C129/C139.

In Caenorhabditis elegans, this protein is Hemiasterlin resistant protein 1 (har-1).